Reading from the N-terminus, the 236-residue chain is Protein YIPF6 (236 aa).

An N-acetylalanine modification is found at Ala2. Over 2 to 84 (AEAEESPGDP…HVLYPRKSNT (83 aa)) the chain is Cytoplasmic. Ser7 is subject to Phosphoserine. The helical transmembrane segment at 85-105 (LLRDWDLWGPLILCVTLALML) threads the bilayer. At 106 to 115 (QRDSADSEKD) the chain is on the lumenal side. The chain crosses the membrane as a helical span at residues 116-136 (GGPQFAEVFVIVWFGAVTITL). The Cytoplasmic portion of the chain corresponds to 137-146 (NSKLLGGNIS). The helical transmembrane segment at 147–167 (FFQSLCVLGYCILPLTVAMLI) threads the bilayer. The Lumenal portion of the chain corresponds to 168–184 (CRLVLLADPGPVNFMVR). Residues 185–205 (LFVVIVMFAWSIVASTAFLAD) traverse the membrane as a helical segment. Topologically, residues 206 to 212 (SQPPNRR) are cytoplasmic. Residues 213-233 (ALAVYPVFLFYFVISWMILTF) traverse the membrane as a helical segment. Residues 234–236 (TPQ) lie on the Lumenal side of the membrane.

It belongs to the YIP1 family. As to quaternary structure, predominantly interacts with YIPF1 or YIPF2, but may also form a ternary complex with YIPF1 and YIPF2. This interaction may stabilize YIPF1 and YIPF2.

It localises to the golgi apparatus membrane. May be required for stable YIPF1 and YIPF2 protein expression. This Homo sapiens (Human) protein is Protein YIPF6 (YIPF6).